Reading from the N-terminus, the 414-residue chain is Gamma-glutamyl phosphate reductase (414 aa).

The protein belongs to the gamma-glutamyl phosphate reductase family.

Its subcellular location is the cytoplasm. It carries out the reaction L-glutamate 5-semialdehyde + phosphate + NADP(+) = L-glutamyl 5-phosphate + NADPH + H(+). The protein operates within amino-acid biosynthesis; L-proline biosynthesis; L-glutamate 5-semialdehyde from L-glutamate: step 2/2. Its function is as follows. Catalyzes the NADPH-dependent reduction of L-glutamate 5-phosphate into L-glutamate 5-semialdehyde and phosphate. The product spontaneously undergoes cyclization to form 1-pyrroline-5-carboxylate. The protein is Gamma-glutamyl phosphate reductase of Clostridium beijerinckii (strain ATCC 51743 / NCIMB 8052) (Clostridium acetobutylicum).